The sequence spans 195 residues: Phosphoheptose isomerase (195 aa).

The SIS domain occupies 37 to 195 (ISDSFKQHGK…IEFEMAKIRQ (159 aa)). 52–54 (NGG) contacts substrate. Positions 61 and 65 each coordinate Zn(2+). Substrate-binding positions include Glu-65, 93 to 94 (ND), 119 to 121 (STS), Ser-124, and Gln-172. Zn(2+)-binding residues include Gln-172 and His-180.

This sequence belongs to the SIS family. GmhA subfamily. As to quaternary structure, homotetramer. It depends on Zn(2+) as a cofactor.

The protein resides in the cytoplasm. The catalysed reaction is 2 D-sedoheptulose 7-phosphate = D-glycero-alpha-D-manno-heptose 7-phosphate + D-glycero-beta-D-manno-heptose 7-phosphate. It participates in carbohydrate biosynthesis; D-glycero-D-manno-heptose 7-phosphate biosynthesis; D-glycero-alpha-D-manno-heptose 7-phosphate and D-glycero-beta-D-manno-heptose 7-phosphate from sedoheptulose 7-phosphate: step 1/1. In terms of biological role, catalyzes the isomerization of sedoheptulose 7-phosphate in D-glycero-D-manno-heptose 7-phosphate. This Histophilus somni (strain 2336) (Haemophilus somnus) protein is Phosphoheptose isomerase.